Consider the following 203-residue polypeptide: Ras-related protein Rab-18 (203 aa).

12 residues coordinate GTP: Ser20, Gly23, Lys24, Ser25, Ser26, Asp37, Pro38, Thr43, Gly69, Lys126, Asp128, and Ala155. The Effector region motif lies at 40–48 (QAATIGVDF). Residues Cys201 and Cys203 are each lipidated (S-geranylgeranyl cysteine). The residue at position 203 (Cys203) is a Cysteine methyl ester.

It belongs to the small GTPase superfamily. Rab family.

It carries out the reaction GTP + H2O = GDP + phosphate + H(+). Functionally, the small GTPases Rab are key regulators of intracellular membrane trafficking, from the formation of transport vesicles to their fusion with membranes. Rabs cycle between an inactive GDP-bound form and an active GTP-bound form that is able to recruit to membranes different sets of downstream effectors directly responsible for vesicle formation, movement, tethering and fusion. Plays a role in apical endocytosis/recycling. May be implicated in transport between the plasma membrane and early endosomes. Plays a role in the shedding of pathogen spores from intestinal cells. This chain is Ras-related protein Rab-18 (rab-18), found in Caenorhabditis elegans.